The primary structure comprises 772 residues: DnaJ homolog subfamily C member 16 (772 aa).

Positions 1–25 (MELKRLGVSWRFLMVLVLILQSLSA) are cleaved as a signal peptide. The Cytoplasmic portion of the chain corresponds to 26-533 (LDFDPYRVLG…ESLLHSNWRE (508 aa)). One can recognise a J domain in the interval 29–93 (DPYRVLGVSR…EKRTNYDHYG (65 aa)). The region spanning 119-245 (FDESFFHFPF…LRQFVESLLP (127 aa)) is the Thioredoxin domain. The helical; Anchor for type IV membrane protein transmembrane segment at 534 to 554 (MMPLLSLIFSALFILFGTVMV) threads the bilayer. Over 555-772 (QAFSDSNEER…FYIPSWPELD (218 aa)) the chain is Extracellular. The disordered stretch occupies residues 560–591 (SNEERESHPADKEEVPEKAGKTEPSFTKESSS). Positions 561–580 (NEERESHPADKEEVPEKAGK) are enriched in basic and acidic residues. Asn629 carries N-linked (GlcNAc...) asparagine glycosylation.

The protein resides in the endoplasmic reticulum membrane. Plays an important role in regulating the size of autophagosomes during the formation process. This chain is DnaJ homolog subfamily C member 16 (Dnajc16), found in Mus musculus (Mouse).